The chain runs to 184 residues: Photosystem I assembly protein Ycf4 (184 aa).

Transmembrane regions (helical) follow at residues 22–42 (FCWACILFLGSLGFLLVGTSS) and 57–77 (ILFFPQGIVMSFYGIAGLFIS).

Belongs to the Ycf4 family.

The protein resides in the plastid. The protein localises to the chloroplast thylakoid membrane. Seems to be required for the assembly of the photosystem I complex. This Chloranthus spicatus (Chulantree) protein is Photosystem I assembly protein Ycf4.